Reading from the N-terminus, the 260-residue chain is Putative enoyl-CoA hydratase/isomerase YngF (260 aa).

This sequence belongs to the enoyl-CoA hydratase/isomerase family.

In Bacillus subtilis (strain 168), this protein is Putative enoyl-CoA hydratase/isomerase YngF (yngF).